Here is a 598-residue protein sequence, read N- to C-terminus: Elongation factor 4 (598 aa).

Residues 4-185 (KNIRNFSIIA…TIITKIPAPK (182 aa)) enclose the tr-type G domain. GTP contacts are provided by residues 16 to 21 (DHGKST) and 132 to 135 (NKID).

The protein belongs to the TRAFAC class translation factor GTPase superfamily. Classic translation factor GTPase family. LepA subfamily.

It is found in the cell inner membrane. It carries out the reaction GTP + H2O = GDP + phosphate + H(+). In terms of biological role, required for accurate and efficient protein synthesis under certain stress conditions. May act as a fidelity factor of the translation reaction, by catalyzing a one-codon backward translocation of tRNAs on improperly translocated ribosomes. Back-translocation proceeds from a post-translocation (POST) complex to a pre-translocation (PRE) complex, thus giving elongation factor G a second chance to translocate the tRNAs correctly. Binds to ribosomes in a GTP-dependent manner. The chain is Elongation factor 4 from Campylobacter jejuni subsp. jejuni serotype O:2 (strain ATCC 700819 / NCTC 11168).